We begin with the raw amino-acid sequence, 503 residues long: Probable cytosol aminopeptidase (503 aa).

Residues K268 and D273 each coordinate Mn(2+). K280 is a catalytic residue. D291, D350, and E352 together coordinate Mn(2+). The active site involves R354.

This sequence belongs to the peptidase M17 family. The cofactor is Mn(2+).

It localises to the cytoplasm. The enzyme catalyses Release of an N-terminal amino acid, Xaa-|-Yaa-, in which Xaa is preferably Leu, but may be other amino acids including Pro although not Arg or Lys, and Yaa may be Pro. Amino acid amides and methyl esters are also readily hydrolyzed, but rates on arylamides are exceedingly low.. It catalyses the reaction Release of an N-terminal amino acid, preferentially leucine, but not glutamic or aspartic acids.. In terms of biological role, presumably involved in the processing and regular turnover of intracellular proteins. Catalyzes the removal of unsubstituted N-terminal amino acids from various peptides. This is Probable cytosol aminopeptidase from Methylobacterium radiotolerans (strain ATCC 27329 / DSM 1819 / JCM 2831 / NBRC 15690 / NCIMB 10815 / 0-1).